Reading from the N-terminus, the 566-residue chain is Glutamate--tRNA ligase (566 aa).

A 'HIGH' region motif is present at residues 93–103 (PNPDYTIHLGN).

Belongs to the class-I aminoacyl-tRNA synthetase family. Glutamate--tRNA ligase type 2 subfamily.

It localises to the cytoplasm. It catalyses the reaction tRNA(Glu) + L-glutamate + ATP = L-glutamyl-tRNA(Glu) + AMP + diphosphate. Catalyzes the attachment of glutamate to tRNA(Glu) in a two-step reaction: glutamate is first activated by ATP to form Glu-AMP and then transferred to the acceptor end of tRNA(Glu). The protein is Glutamate--tRNA ligase of Staphylothermus marinus (strain ATCC 43588 / DSM 3639 / JCM 9404 / F1).